We begin with the raw amino-acid sequence, 835 residues long: U-box domain-containing protein 35 (835 aa).

Disordered stretches follow at residues 1 to 22 (MSRS…SRTV), 177 to 303 (VRPS…SSNR), and 410 to 457 (EKEK…LEGT). A compositionally biased stretch (pro residues) spans 10-19 (LPPPPPPPPS). Residues 195-218 (RTNSSSGSSGPTSDSSDVMSSAHD) show a composition bias toward low complexity. The span at 269-282 (SSINRSSTDTTSRW) shows a compositional bias: polar residues. 2 stretches are compositionally biased toward basic and acidic residues: residues 285–295 (RRRDYEERKEA) and 410–455 (EKEK…EKLE). A coiled-coil region spans residues 340-459 (QSYTDNQVNL…EKEKLEGTLG (120 aa)). Residues 480–745 (FSEELKIGMG…DLKDQILPAL (266 aa)) form the Protein kinase domain. Residues 486 to 494 (IGMGAYGAV) and Lys-507 contribute to the ATP site. Asp-602 serves as the catalytic Proton acceptor. The U-box domain occupies 765–835 (QPPTHFICPL…TAIMEWRSTR (71 aa)).

Belongs to the protein kinase superfamily. Ser/Thr protein kinase family.

It carries out the reaction L-seryl-[protein] + ATP = O-phospho-L-seryl-[protein] + ADP + H(+). The catalysed reaction is L-threonyl-[protein] + ATP = O-phospho-L-threonyl-[protein] + ADP + H(+). It catalyses the reaction S-ubiquitinyl-[E2 ubiquitin-conjugating enzyme]-L-cysteine + [acceptor protein]-L-lysine = [E2 ubiquitin-conjugating enzyme]-L-cysteine + N(6)-ubiquitinyl-[acceptor protein]-L-lysine.. The protein operates within protein modification; protein ubiquitination. Its function is as follows. Functions as an E3 ubiquitin ligase. This chain is U-box domain-containing protein 35 (PUB35), found in Arabidopsis thaliana (Mouse-ear cress).